A 63-amino-acid polypeptide reads, in one-letter code: Large ribosomal subunit protein uL29 (63 aa).

Belongs to the universal ribosomal protein uL29 family.

The chain is Large ribosomal subunit protein uL29 from Neisseria meningitidis serogroup C (strain 053442).